The chain runs to 273 residues: 4-hydroxy-3-methylbut-2-enyl diphosphate reductase (273 aa).

Cys-12 provides a ligand contact to [4Fe-4S] cluster. (2E)-4-hydroxy-3-methylbut-2-enyl diphosphate-binding residues include His-36 and His-70. 2 residues coordinate dimethylallyl diphosphate: His-36 and His-70. The isopentenyl diphosphate site is built by His-36 and His-70. Cys-92 contributes to the [4Fe-4S] cluster binding site. His-120 serves as a coordination point for (2E)-4-hydroxy-3-methylbut-2-enyl diphosphate. His-120 lines the dimethylallyl diphosphate pocket. His-120 provides a ligand contact to isopentenyl diphosphate. The Proton donor role is filled by Glu-122. Thr-157 provides a ligand contact to (2E)-4-hydroxy-3-methylbut-2-enyl diphosphate. A [4Fe-4S] cluster-binding site is contributed by Cys-185. The (2E)-4-hydroxy-3-methylbut-2-enyl diphosphate site is built by Ser-213, Ser-214, Asn-215, and Ser-257. Ser-213, Ser-214, Asn-215, and Ser-257 together coordinate dimethylallyl diphosphate. Residues Ser-213, Ser-214, Asn-215, and Ser-257 each contribute to the isopentenyl diphosphate site.

This sequence belongs to the IspH family. [4Fe-4S] cluster is required as a cofactor.

The enzyme catalyses isopentenyl diphosphate + 2 oxidized [2Fe-2S]-[ferredoxin] + H2O = (2E)-4-hydroxy-3-methylbut-2-enyl diphosphate + 2 reduced [2Fe-2S]-[ferredoxin] + 2 H(+). The catalysed reaction is dimethylallyl diphosphate + 2 oxidized [2Fe-2S]-[ferredoxin] + H2O = (2E)-4-hydroxy-3-methylbut-2-enyl diphosphate + 2 reduced [2Fe-2S]-[ferredoxin] + 2 H(+). The protein operates within isoprenoid biosynthesis; dimethylallyl diphosphate biosynthesis; dimethylallyl diphosphate from (2E)-4-hydroxy-3-methylbutenyl diphosphate: step 1/1. It functions in the pathway isoprenoid biosynthesis; isopentenyl diphosphate biosynthesis via DXP pathway; isopentenyl diphosphate from 1-deoxy-D-xylulose 5-phosphate: step 6/6. In terms of biological role, catalyzes the conversion of 1-hydroxy-2-methyl-2-(E)-butenyl 4-diphosphate (HMBPP) into a mixture of isopentenyl diphosphate (IPP) and dimethylallyl diphosphate (DMAPP). Acts in the terminal step of the DOXP/MEP pathway for isoprenoid precursor biosynthesis. This chain is 4-hydroxy-3-methylbut-2-enyl diphosphate reductase, found in Helicobacter hepaticus (strain ATCC 51449 / 3B1).